The sequence spans 706 residues: K(+)-insensitive pyrophosphate-energized proton pump (706 aa).

Helical transmembrane passes span 1–21 (MTAL…AIWA), 62–82 (VVIF…GFAI), 83–103 (GAIL…RANV), 129–149 (LLVA…LIHF), and 164–184 (VALG…GGIF). Lys186 lines the substrate pocket. Positions 189, 193, 216, and 219 each coordinate Mg(2+). 6 helical membrane-spanning segments follow: residues 231 to 251 (LFET…IFFG), 263 to 283 (TLPL…TFFV), 300 to 320 (IATG…LIGF), 330 to 350 (GLAL…IIWI), 393 to 413 (IVII…GIAI), and 414 to 434 (ATTT…FGPV). Asp436 contacts Mg(2+). 4 helical membrane-spanning segments follow: residues 467–487 (AVTK…LFAA), 516–536 (YVVV…AMGM), 585–605 (IIPS…IYAI), and 616–636 (AFSA…FVAI). Asp646, Asp672, and Asp676 together coordinate Ca(2+). Lys679 is a binding site for substrate. A helical membrane pass occupies residues 685–705 (AVNPMIKITNIVALLLLAILA).

The protein belongs to the H(+)-translocating pyrophosphatase (TC 3.A.10) family. K(+)-insensitive subfamily. As to quaternary structure, homodimer. Requires Mg(2+) as cofactor.

It is found in the cell inner membrane. The enzyme catalyses diphosphate + H2O + H(+)(in) = 2 phosphate + 2 H(+)(out). Proton pump that utilizes the energy of pyrophosphate hydrolysis as the driving force for proton movement across the membrane. Generates a proton motive force. This is K(+)-insensitive pyrophosphate-energized proton pump from Rhodopseudomonas palustris (strain ATCC BAA-98 / CGA009).